The chain runs to 191 residues: Cilia- and flagella-associated protein 20 (191 aa).

Belongs to the CFAP20 family.

The protein localises to the cytoplasm. The protein resides in the cytoskeleton. It is found in the cilium basal body. Its subcellular location is the cell projection. It localises to the cilium. The protein localises to the cilium axoneme. In terms of biological role, cilium- and flagellum-specific protein required for axonemal structure organization and motility. Microtubule inner protein (MIP) part of the dynein-decorated doublet microtubules (DMTs) in cilia axoneme, which is required for motile cilia beating. May also play a role in cortical organization of basal body. The sequence is that of Cilia- and flagella-associated protein 20 (CFAP20) from Paramecium tetraurelia.